We begin with the raw amino-acid sequence, 181 residues long: Ferritin BfrB (181 aa).

Residues 15–150 (MQEQIHNEFT…TLVRVADRAG (136 aa)) enclose the Ferritin-like diiron domain. Fe cation-binding residues include Glu-22, Glu-55, His-58, Glu-99, and Gln-132.

It belongs to the ferritin family. Prokaryotic subfamily. As to quaternary structure, homooligomer of 24 subunits that are packed together to form an approximately spherical molecule with a central cavity, in which large amounts of iron can be stored.

It carries out the reaction 4 Fe(2+) + O2 + 4 H(+) = 4 Fe(3+) + 2 H2O. Iron-storage protein that displays ferroxidase activity, catalyzing the oxidation of Fe(2+) ions into Fe(3+) ions, that can then be deposited as a ferric-oxide mineral core within the central cavity of the protein complex. In Mycobacterium tuberculosis (strain ATCC 35801 / TMC 107 / Erdman), this protein is Ferritin BfrB (bfrB).